A 32-amino-acid polypeptide reads, in one-letter code: AQIDCDKECNRRCSKAYCGICCEKCHCVPPGT.

Belongs to the GASA family. As to expression, expressed in pollen (at protein level).

The sequence is that of Cypmaclein from Cupressus sempervirens (Italian cypress).